We begin with the raw amino-acid sequence, 122 residues long: Large ribosomal subunit protein uL14 (122 aa).

Belongs to the universal ribosomal protein uL14 family. As to quaternary structure, part of the 50S ribosomal subunit. Forms a cluster with proteins L3 and L19. In the 70S ribosome, L14 and L19 interact and together make contacts with the 16S rRNA in bridges B5 and B8.

Binds to 23S rRNA. Forms part of two intersubunit bridges in the 70S ribosome. This is Large ribosomal subunit protein uL14 from Acaryochloris marina (strain MBIC 11017).